The primary structure comprises 254 residues: 5'-nucleotidase SurE (254 aa).

A divalent metal cation contacts are provided by Asp-8, Asp-9, Ser-40, and Asn-93.

Belongs to the SurE nucleotidase family. The cofactor is a divalent metal cation.

Its subcellular location is the cytoplasm. It carries out the reaction a ribonucleoside 5'-phosphate + H2O = a ribonucleoside + phosphate. Its function is as follows. Nucleotidase that shows phosphatase activity on nucleoside 5'-monophosphates. The sequence is that of 5'-nucleotidase SurE from Methylobacterium radiotolerans (strain ATCC 27329 / DSM 1819 / JCM 2831 / NBRC 15690 / NCIMB 10815 / 0-1).